Consider the following 246-residue polypeptide: MyoD family inhibitor (246 aa).

2 disordered regions span residues 1 to 76 and 91 to 151; these read MYQV…LDST and GNPL…SKST. Over residues 14–26 the composition is skewed to low complexity; that stretch reads APYGAPSAAPGPA. Residues 99–246 enclose the MDFI domain; that stretch reads LLPNDSGHPS…MECCGLCFSS (148 aa).

The protein belongs to the MDFI family. In terms of assembly, interacts (via C-terminus) with AXIN1 and LEF1. Interacts with CCNT2. Interacts (via C-terminus) with Piezo channel composed of PIEZO1 or PIEZO2; the interaction prolongs Piezo channel inactivation.

Its subcellular location is the nucleus. The protein resides in the cytoplasm. Inhibits the transactivation activity of the Myod family of myogenic factors and represses myogenesis. Acts by associating with Myod family members and retaining them in the cytoplasm by masking their nuclear localization signals. Can also interfere with the DNA-binding activity of Myod family members. Plays an important role in trophoblast and chondrogenic differentiation. Regulates the transcriptional activity of TCF7L1/TCF3 by interacting directly with TCF7L1/TCF3 and preventing it from binding DNA. Binds to the axin complex, resulting in an increase in the level of free beta-catenin. Affects axin regulation of the WNT and JNK signaling pathways. Regulates the activity of mechanosensitive Piezo channel. The sequence is that of MyoD family inhibitor (MDFI) from Homo sapiens (Human).